A 92-amino-acid polypeptide reads, in one-letter code: Small ribosomal subunit protein bS20 (92 aa).

It belongs to the bacterial ribosomal protein bS20 family.

Its function is as follows. Binds directly to 16S ribosomal RNA. In Magnetococcus marinus (strain ATCC BAA-1437 / JCM 17883 / MC-1), this protein is Small ribosomal subunit protein bS20.